The sequence spans 283 residues: Formamidopyrimidine-DNA glycosylase (283 aa).

Pro2 (schiff-base intermediate with DNA) is an active-site residue. Glu3 acts as the Proton donor in catalysis. Lys58 acts as the Proton donor; for beta-elimination activity in catalysis. His100, Arg119, and Arg162 together coordinate DNA. The FPG-type zinc finger occupies 247 to 283 (DVYGREGEPCRRAGCTGTVTRITQSGRSSFYCGKCQR). Catalysis depends on Arg273, which acts as the Proton donor; for delta-elimination activity.

The protein belongs to the FPG family. In terms of assembly, monomer. Requires Zn(2+) as cofactor.

The catalysed reaction is Hydrolysis of DNA containing ring-opened 7-methylguanine residues, releasing 2,6-diamino-4-hydroxy-5-(N-methyl)formamidopyrimidine.. It carries out the reaction 2'-deoxyribonucleotide-(2'-deoxyribose 5'-phosphate)-2'-deoxyribonucleotide-DNA = a 3'-end 2'-deoxyribonucleotide-(2,3-dehydro-2,3-deoxyribose 5'-phosphate)-DNA + a 5'-end 5'-phospho-2'-deoxyribonucleoside-DNA + H(+). Functionally, involved in base excision repair of DNA damaged by oxidation or by mutagenic agents. Acts as a DNA glycosylase that recognizes and removes damaged bases. Has a preference for oxidized purines, such as 7,8-dihydro-8-oxoguanine (8-oxoG). Has AP (apurinic/apyrimidinic) lyase activity and introduces nicks in the DNA strand. Cleaves the DNA backbone by beta-delta elimination to generate a single-strand break at the site of the removed base with both 3'- and 5'-phosphates. The protein is Formamidopyrimidine-DNA glycosylase of Ruegeria sp. (strain TM1040) (Silicibacter sp.).